A 140-amino-acid polypeptide reads, in one-letter code: ATP synthase epsilon chain, chloroplastic (140 aa).

The protein belongs to the ATPase epsilon chain family. As to quaternary structure, F-type ATPases have 2 components, CF(1) - the catalytic core - and CF(0) - the membrane proton channel. CF(1) has five subunits: alpha(3), beta(3), gamma(1), delta(1), epsilon(1). CF(0) has three main subunits: a, b and c.

It is found in the plastid. The protein localises to the chloroplast thylakoid membrane. Functionally, produces ATP from ADP in the presence of a proton gradient across the membrane. The chain is ATP synthase epsilon chain, chloroplastic from Panax ginseng (Korean ginseng).